We begin with the raw amino-acid sequence, 349 residues long: Beta-hexosaminidase (349 aa).

Residues Asp64, Arg72, Arg138, and 168-169 each bind substrate; that span reads KH. His181 functions as the Proton donor/acceptor in the catalytic mechanism. Residue Asp252 is the Nucleophile of the active site.

The protein belongs to the glycosyl hydrolase 3 family. NagZ subfamily.

The protein resides in the cytoplasm. The enzyme catalyses Hydrolysis of terminal non-reducing N-acetyl-D-hexosamine residues in N-acetyl-beta-D-hexosaminides.. The protein operates within cell wall biogenesis; peptidoglycan recycling. Its function is as follows. Plays a role in peptidoglycan recycling by cleaving the terminal beta-1,4-linked N-acetylglucosamine (GlcNAc) from peptide-linked peptidoglycan fragments, giving rise to free GlcNAc, anhydro-N-acetylmuramic acid and anhydro-N-acetylmuramic acid-linked peptides. The sequence is that of Beta-hexosaminidase from Nitrosospira multiformis (strain ATCC 25196 / NCIMB 11849 / C 71).